We begin with the raw amino-acid sequence, 263 residues long: Endonuclease 8 (263 aa).

Pro-2 acts as the Schiff-base intermediate with DNA in catalysis. The active-site Proton donor is the Glu-3. The Proton donor; for beta-elimination activity role is filled by Lys-53. 3 residues coordinate DNA: Gln-70, Arg-125, and Asn-169. An FPG-type zinc finger spans residues 229-263 (KVFHRDGEACERCGGIIEKTTLSSRPFYWCPHCQK). The Proton donor; for delta-elimination activity role is filled by Arg-253.

The protein belongs to the FPG family. It depends on Zn(2+) as a cofactor.

The enzyme catalyses 2'-deoxyribonucleotide-(2'-deoxyribose 5'-phosphate)-2'-deoxyribonucleotide-DNA = a 3'-end 2'-deoxyribonucleotide-(2,3-dehydro-2,3-deoxyribose 5'-phosphate)-DNA + a 5'-end 5'-phospho-2'-deoxyribonucleoside-DNA + H(+). Involved in base excision repair of DNA damaged by oxidation or by mutagenic agents. Acts as a DNA glycosylase that recognizes and removes damaged bases. Has a preference for oxidized pyrimidines, such as thymine glycol, 5,6-dihydrouracil and 5,6-dihydrothymine. Has AP (apurinic/apyrimidinic) lyase activity and introduces nicks in the DNA strand. Cleaves the DNA backbone by beta-delta elimination to generate a single-strand break at the site of the removed base with both 3'- and 5'-phosphates. The protein is Endonuclease 8 of Salmonella enteritidis PT4 (strain P125109).